The following is an 84-amino-acid chain: Large ribosomal subunit protein bL27 (84 aa).

The disordered stretch occupies residues 1 to 21; the sequence is MATKKAGGSSRNGRDSAGRRL.

The protein belongs to the bacterial ribosomal protein bL27 family.

The polypeptide is Large ribosomal subunit protein bL27 (Pelagibacter ubique (strain HTCC1062)).